Consider the following 38-residue polypeptide: Large ribosomal subunit protein bL36 (38 aa).

This sequence belongs to the bacterial ribosomal protein bL36 family.

The chain is Large ribosomal subunit protein bL36 from Anaeromyxobacter dehalogenans (strain 2CP-1 / ATCC BAA-258).